A 393-amino-acid polypeptide reads, in one-letter code: MTMLETKTDPMVISMGPHHPSMHGVLRLIVTLDGENVIDCEPVLGYLHRGMEKIAENRTIVQYLPYVTRWDYLATMFTEAITVNAPERLANIEVPKRASYIRVIMLELSRIASHLLWLGPFMADIGAQTPFFYIFREREMIYDLFEAATGMRMMHNYFRIGGVAADLPYGWVDKCLDFCDYFLPKVDEYERLITNNPIFLKRVKDIGKISKEDAINWGLSGPMLRASGVKWDLRKVDNYECYDELDWSIQWQSDGDCLARYQVRIGEMRESIKIIQQALKAIPGGPYENLEARRLSKGRKSEWNNFEYQFIGKKPSPTFKMPKQEHYVRVEAPKGELGVFLIGDDNVFPWRWKIRAPGFINVQILPQLVQGMKLADIMTILGSIDIIMGEVDR.

The protein belongs to the complex I 49 kDa subunit family. As to quaternary structure, NDH is composed of at least 16 different subunits, 5 of which are encoded in the nucleus.

The protein resides in the plastid. The protein localises to the chloroplast thylakoid membrane. The enzyme catalyses a plastoquinone + NADH + (n+1) H(+)(in) = a plastoquinol + NAD(+) + n H(+)(out). It catalyses the reaction a plastoquinone + NADPH + (n+1) H(+)(in) = a plastoquinol + NADP(+) + n H(+)(out). In terms of biological role, NDH shuttles electrons from NAD(P)H:plastoquinone, via FMN and iron-sulfur (Fe-S) centers, to quinones in the photosynthetic chain and possibly in a chloroplast respiratory chain. The immediate electron acceptor for the enzyme in this species is believed to be plastoquinone. Couples the redox reaction to proton translocation, and thus conserves the redox energy in a proton gradient. This Chlorokybus atmophyticus (Soil alga) protein is NAD(P)H-quinone oxidoreductase subunit H, chloroplastic.